The following is a 668-amino-acid chain: Transketolase (668 aa).

His-28 provides a ligand contact to substrate. Thiamine diphosphate contacts are provided by residues His-68 and 116-118 (GPL). Asp-157 lines the Mg(2+) pocket. Residues Gly-158 and Asn-187 each coordinate thiamine diphosphate. Mg(2+)-binding residues include Asn-187 and Ile-189. Residues His-263, Arg-358, and Ser-385 each coordinate substrate. His-263 contacts thiamine diphosphate. The active-site Proton donor is Glu-412. Residue Phe-438 participates in thiamine diphosphate binding. Substrate-binding residues include His-462, Asp-470, His-474, and Arg-521.

This sequence belongs to the transketolase family. In terms of assembly, homodimer. Mg(2+) is required as a cofactor. Thiamine diphosphate serves as cofactor.

The catalysed reaction is D-sedoheptulose 7-phosphate + D-glyceraldehyde 3-phosphate = aldehydo-D-ribose 5-phosphate + D-xylulose 5-phosphate. In terms of biological role, catalyzes the transfer of a two-carbon ketol group from a ketose donor to an aldose acceptor, likely via a covalent intermediate with the cofactor thiamine pyrophosphate. Can use L-erythrulose as donor and D-ribose-5-phosphate as acceptor substrates, forming glycolaldehyde and D-sedoheptulose-7-phosphate. For synthetic purposes, is able to use hydroxypyruvate (HPA) as donor substrate, making the reaction irreversible due to the release of carbon dioxide, and various aldehydes as acceptor substrates, which leads to the corresponding ketoses. Thus, using hydroxypyruvate as donor and three different aldehydes as acceptors, i.e. glycolaldehyde, D-glyceraldehyde and butyraldehyde, the enzyme stereoselectively forms the corresponding products L-erythrulose, D-xylulose and (3S)-1,3-dihydroxyhexan-2-one, respectively. The sequence is that of Transketolase from Geobacillus stearothermophilus (Bacillus stearothermophilus).